Reading from the N-terminus, the 449-residue chain is Exodeoxyribonuclease 7 large subunit (449 aa).

This sequence belongs to the XseA family. In terms of assembly, heterooligomer composed of large and small subunits.

Its subcellular location is the cytoplasm. The catalysed reaction is Exonucleolytic cleavage in either 5'- to 3'- or 3'- to 5'-direction to yield nucleoside 5'-phosphates.. Its function is as follows. Bidirectionally degrades single-stranded DNA into large acid-insoluble oligonucleotides, which are then degraded further into small acid-soluble oligonucleotides. The polypeptide is Exodeoxyribonuclease 7 large subunit (Salmonella typhi).